Consider the following 401-residue polypeptide: Imidazolonepropionase (401 aa).

Fe(3+) is bound by residues H70 and H72. Positions 70 and 72 each coordinate Zn(2+). 4-imidazolone-5-propanoate is bound by residues R79, Y142, and H175. Residue Y142 participates in N-formimidoyl-L-glutamate binding. H240 contributes to the Fe(3+) binding site. H240 is a Zn(2+) binding site. Q243 provides a ligand contact to 4-imidazolone-5-propanoate. D315 is a Fe(3+) binding site. D315 is a Zn(2+) binding site. N317 and G319 together coordinate N-formimidoyl-L-glutamate. Residue S320 participates in 4-imidazolone-5-propanoate binding.

It belongs to the metallo-dependent hydrolases superfamily. HutI family. The cofactor is Zn(2+). Fe(3+) serves as cofactor.

It localises to the cytoplasm. The catalysed reaction is 4-imidazolone-5-propanoate + H2O = N-formimidoyl-L-glutamate. It functions in the pathway amino-acid degradation; L-histidine degradation into L-glutamate; N-formimidoyl-L-glutamate from L-histidine: step 3/3. In terms of biological role, catalyzes the hydrolytic cleavage of the carbon-nitrogen bond in imidazolone-5-propanoate to yield N-formimidoyl-L-glutamate. It is the third step in the universal histidine degradation pathway. This chain is Imidazolonepropionase, found in Ruegeria pomeroyi (strain ATCC 700808 / DSM 15171 / DSS-3) (Silicibacter pomeroyi).